The chain runs to 139 residues: Ribonuclease P protein component (139 aa).

This sequence belongs to the RnpA family. In terms of assembly, consists of a catalytic RNA component (M1 or rnpB) and a protein subunit.

The catalysed reaction is Endonucleolytic cleavage of RNA, removing 5'-extranucleotides from tRNA precursor.. Functionally, RNaseP catalyzes the removal of the 5'-leader sequence from pre-tRNA to produce the mature 5'-terminus. It can also cleave other RNA substrates such as 4.5S RNA. The protein component plays an auxiliary but essential role in vivo by binding to the 5'-leader sequence and broadening the substrate specificity of the ribozyme. This chain is Ribonuclease P protein component, found in Chlamydia felis (strain Fe/C-56) (Chlamydophila felis).